Consider the following 671-residue polypeptide: Synaptotagmin-like protein 4 (671 aa).

The RabBD domain occupies 4–122 (LLDLSFLSEE…KATGDWFYDQ (119 aa)). Residues 63 to 105 (CARCQESLGRLSPKTNTCRGCNHLVCRDCRIQESNGTWRCKVC) form an FYVE-type zinc finger. The disordered stretch occupies residues 199–243 (SESLDSFTADSDSTSRRDSLDKSGLFPEWKKMSAPKSQVEKETQP). A phosphoserine mark is found at Ser201, Ser204, Ser217, Ser221, Ser274, and Ser289. A C2 1 domain is found at 356-478 (VTGRIAFSLK…KLDKKLDHCL (123 aa)). Ser488 bears the Phosphoserine mark. Positions 507–633 (PASKTPVGGD…ISNGEVVDWM (127 aa)) constitute a C2 2 domain.

In terms of assembly, part of a ternary complex containing STX1A and RAB27A. Can bind both dominant negative and dominant active mutants of RAB27A. Binds STXBP1, RAB3A, RAB8A and RAB27B. Interacts with MYO5A.

It is found in the membrane. The protein resides in the cell membrane. Its subcellular location is the cytoplasmic vesicle. It localises to the secretory vesicle membrane. Its function is as follows. Modulates exocytosis of dense-core granules and secretion of hormones in the pancreas and the pituitary. Interacts with vesicles containing negatively charged phospholipids in a Ca(2+)-independent manner. This Homo sapiens (Human) protein is Synaptotagmin-like protein 4 (SYTL4).